We begin with the raw amino-acid sequence, 887 residues long: Integrator complex subunit 6 (887 aa).

The 225-residue stretch at 3–227 folds into the VWFA domain; the sequence is ILLFLIDTSA…QCLESLVQKV (225 aa). The short motif at 626–633 is the Inhibitory loop element; that stretch reads MMIDEADE. S804 bears the Phosphoserine mark.

The protein belongs to the Integrator subunit 6 family. Component of the Integrator complex, composed of core subunits INTS1, INTS2, INTS3, INTS4, INTS5, INTS6, INTS7, INTS8, INTS9/RC74, INTS10, INTS11/CPSF3L, INTS12, INTS13, INTS14 and INTS15. The core complex associates with protein phosphatase 2A subunits PPP2CA and PPP2R1A, to form the Integrator-PP2A (INTAC) complex. In terms of tissue distribution, widely expressed. Expressed in heart, brain, placenta, lung, liver, skeletal muscle, kidney and pancreas.

Its subcellular location is the nucleus. It localises to the chromosome. In terms of biological role, component of the integrator complex, a multiprotein complex that terminates RNA polymerase II (Pol II) transcription in the promoter-proximal region of genes. The integrator complex provides a quality checkpoint during transcription elongation by driving premature transcription termination of transcripts that are unfavorably configured for transcriptional elongation: the complex terminates transcription by (1) catalyzing dephosphorylation of the C-terminal domain (CTD) of Pol II subunit POLR2A and SUPT5H/SPT5, (2) degrading the exiting nascent RNA transcript via endonuclease activity and (3) promoting the release of Pol II from bound DNA. The integrator complex is also involved in terminating the synthesis of non-coding Pol II transcripts, such as enhancer RNAs (eRNAs), small nuclear RNAs (snRNAs), telomerase RNAs and long non-coding RNAs (lncRNAs). Within the integrator complex, INTS6 acts as a molecular adapter that promotes assembly of protein phosphatase 2A (PP2A) subunits to the integrator core complex, promoting recruitment of PP2A to transcription pause-release checkpoint. Mediates recruitment of cytoplasmic dynein to the nuclear envelope, probably as component of the integrator complex. May have a tumor suppressor role; an ectopic expression suppressing tumor cell growth. In Homo sapiens (Human), this protein is Integrator complex subunit 6.